Here is a 102-residue protein sequence, read N- to C-terminus: MNQTKLNQRLKQQQLFDIYGELLTKRQACYFNEYINLDLSMQEIADKYQVKKSSIHQHIKTCNLIFNRFEAKLQLFKKQQLRLKLYEKITDPQLREQLIKLR.

The protein belongs to the UPF0122 family.

Functionally, might take part in the signal recognition particle (SRP) pathway. This is inferred from the conservation of its genetic proximity to ftsY/ffh. May be a regulatory protein. The polypeptide is UPF0122 protein MPN_424 (Mycoplasma pneumoniae (strain ATCC 29342 / M129 / Subtype 1) (Mycoplasmoides pneumoniae)).